Here is a 173-residue protein sequence, read N- to C-terminus: C-phycocyanin-2 beta subunit (173 aa).

Residue Asn-73 is modified to N4-methylasparagine. Residues Cys-83 and Cys-154 each coordinate (2R,3E)-phycocyanobilin.

The protein belongs to the phycobiliprotein family. As to quaternary structure, heterodimer of an alpha and a beta subunit, which further assembles into trimers and the trimers into hexamers. In terms of processing, contains two covalently linked bilin chromophores.

The protein resides in the cellular thylakoid membrane. Functionally, light-harvesting photosynthetic bile pigment-protein from the phycobiliprotein complex (phycobilisome, PBS). Phycocyanin is the major phycobiliprotein in the PBS rod. The polypeptide is C-phycocyanin-2 beta subunit (cpcB2) (Synechococcus sp. (strain ATCC 27144 / PCC 6301 / SAUG 1402/1) (Anacystis nidulans)).